The chain runs to 268 residues: Bis(5'-nucleosyl)-tetraphosphatase, symmetrical (268 aa).

This sequence belongs to the Ap4A hydrolase family.

The enzyme catalyses P(1),P(4)-bis(5'-adenosyl) tetraphosphate + H2O = 2 ADP + 2 H(+). Hydrolyzes diadenosine 5',5'''-P1,P4-tetraphosphate to yield ADP. This is Bis(5'-nucleosyl)-tetraphosphatase, symmetrical from Nitrosomonas europaea (strain ATCC 19718 / CIP 103999 / KCTC 2705 / NBRC 14298).